A 122-amino-acid polypeptide reads, in one-letter code: Large ribosomal subunit protein uL14c (122 aa).

This sequence belongs to the universal ribosomal protein uL14 family. In terms of assembly, part of the 50S ribosomal subunit.

The protein resides in the plastid. Its subcellular location is the chloroplast. Functionally, binds to 23S rRNA. The polypeptide is Large ribosomal subunit protein uL14c (Glycine max (Soybean)).